Here is a 325-residue protein sequence, read N- to C-terminus: Olfactory receptor 6Y1 (325 aa).

Residues methionine 1–leucine 30 lie on the Extracellular side of the membrane. A glycan (N-linked (GlcNAc...) asparagine) is linked at asparagine 10. Residues leucine 31–isoleucine 51 traverse the membrane as a helical segment. At leucine 52–glutamine 59 the chain is on the cytoplasmic side. The helical transmembrane segment at leucine 60–threonine 80 threads the bilayer. The Extracellular segment spans residues valine 81 to threonine 104. Cysteines 102 and 194 form a disulfide. The helical transmembrane segment at glutamine 105–phenylalanine 125 threads the bilayer. Over aspartate 126–glutamine 144 the chain is Cytoplasmic. The helical transmembrane segment at leucine 145–methionine 165 threads the bilayer. Topologically, residues valine 166–methionine 202 are extracellular. Asparagine 191 is a glycosylation site (N-linked (GlcNAc...) asparagine). A helical membrane pass occupies residues valine 203 to serine 222. Over tyrosine 223–alanine 242 the chain is Cytoplasmic. Residues phenylalanine 243 to threonine 263 traverse the membrane as a helical segment. Topologically, residues tyrosine 264–asparagine 276 are extracellular. Residues lysine 277–leucine 297 traverse the membrane as a helical segment. Residues arginine 298–serine 325 lie on the Cytoplasmic side of the membrane.

Belongs to the G-protein coupled receptor 1 family.

The protein localises to the cell membrane. In terms of biological role, odorant receptor. This Homo sapiens (Human) protein is Olfactory receptor 6Y1 (OR6Y1).